The primary structure comprises 483 residues: S-adenosylhomocysteine hydrolase-like protein 1 (483 aa).

Residues 1–56 (MQEFTKFPTKTGRRSLSRSISQSSTDSYSSAASYTDSSDDEVSPREKQQTNSKGSS) form a disordered region. The span at 17 to 36 (SRSISQSSTDSYSSAASYTD) shows a compositional bias: low complexity. Residues 18-45 (RSISQSSTDSYSSAASYTDSSDDEVSPR) are PEST. Phosphoserine; by PKD is present on Ser-21. Residues Ser-24, Ser-27, Ser-30, and Ser-37 each carry the phosphoserine modification. The tract at residues 91 to 154 (QGEKPLAGAK…EAGVAVFAWK (64 aa)) is interaction with BCL2L10. Thr-108, Asp-182, Glu-207, Lys-237, and Asp-241 together coordinate substrate. The NAD binding stretch occupies residues 234 to 401 (SVTKQKFDNL…EGRLLNLSCS (168 aa)). Residues 271–275 (GYGEV), Glu-294, and Asn-329 contribute to the NAD(+) site. Residue Ser-344 is modified to Phosphoserine. 350–352 (MGH) is a binding site for NAD(+). A PDZ-binding region spans residues 473–483 (NGPFKPNYYRY).

This sequence belongs to the adenosylhomocysteinase family. In terms of assembly, forms multimers. Forms heteromultimers with AHCYL2 (via the C-terminal region). Interacts (when phosphorylated) with ITPR1 (when not phosphorylated); the interaction suppresses inositol 1,4,5-trisphosphate binding to ITPR1. Interacts with BCL2L10; this strengthens the interaction of AHCYL1 with ITPR1. Interacts with CFTR and SLC26A6; the interactions take place once AHCYL1 is released from ITPR1 and increase CFTR and SLC26A6 activities. Interacts with RRM1; in a phosphorylation- and (dATP)-dependent manner. Interacts (via PEST domain when phosphorylated) with SLC4A4 isoform 1 but not isoform 2; the interaction increases SLC4A4 isoform 1 activity. Interacts (when phosphorylated) with SLC9A3; the interaction is required for SLC9A3 apical location and activity. Interacts (when phosphorylated) with FIP1L1; the interaction is direct and associates AHCYL1 with the CPSF complex and RNA. Interacts with PAPOLA. Interacts with ZCCHC4. Interacts with AHCY. NAD(+) is required as a cofactor. In terms of processing, phosphorylated at Ser/Thr residues between Ser-21 and Thr-25 in the PEST region: required for interaction with dATP-bound RRM1 and ITPR1. Phosphorylation at Ser-21 by PRKD1 and CAMK4 is required for further phosphorylations by CSNK1A1. Phosphorylation is induced by oxidative stress. Probably phosphorylated by CAMK2A; phosphorylation at Ser-21 may be required for interaction with SLC9A3. Dephosphorylated in response to apoptotic stress conditions which causes translocation of both AHCYL1 and BCL2L10 from mitochondria-associated endoplasmic reticulum membranes and promotes apoptosis. Expressed in kidney proximal tubules and outer medulla (at protein level).

It localises to the endoplasmic reticulum. The protein resides in the cytoplasm. It is found in the cytosol. The protein localises to the apical cell membrane. Its subcellular location is the microsome. Functionally, multifaceted cellular regulator which coordinates several essential cellular functions including regulation of epithelial HCO3(-) and fluid secretion, mRNA processing and DNA replication. Regulates ITPR1 sensitivity to inositol 1,4,5-trisphosphate, competing for the common binding site and acting as endogenous 'pseudoligand' whose inhibitory activity can be modulated by its phosphorylation status. Promotes the formation of contact points between the endoplasmic reticulum (ER) and mitochondria, facilitating transfer of Ca(2+) from the ER to mitochondria. Under normal cellular conditions, functions cooperatively with BCL2L10 to limit ITPR1-mediated Ca(2+) release but, under apoptotic stress conditions, dephosphorylated which promotes dissociation of both AHCYL1 and BCL2L10 from mitochondria-associated endoplasmic reticulum membranes, inhibits BCL2L10 interaction with ITPR1 and leads to increased Ca(2+) transfer to mitochondria which promotes apoptosis. In the pancreatic and salivary ducts, at resting state, attenuates inositol 1,4,5-trisphosphate-induced calcium release by interacting with ITPR1. When extracellular stimuli induce ITPR1 phosphorylation or inositol 1,4,5-trisphosphate production, dissociates from ITPR1 to interact with CFTR and SLC26A6, mediating their synergistic activation by calcium and cAMP that stimulates the epithelial secretion of electrolytes and fluid. Also activates basolateral SLC4A4 isoform 1 to coordinate fluid and HCO3(-) secretion. Inhibits the effect of STK39 on SLC4A4 and CFTR by recruiting PP1 phosphatase which activates SLC4A4, SLC26A6 and CFTR through dephosphorylation. Mediates the induction of SLC9A3 surface expression produced by Angiotensin-2. Depending on the cell type, activates SLC9A3 in response to calcium or reverses SLC9A3R2-dependent calcium inhibition. May modulate the polyadenylation state of specific mRNAs, both by controlling the subcellular location of FIP1L1 and by inhibiting PAPOLA activity, in response to a stimulus that alters its phosphorylation state. Acts as a (dATP)-dependent inhibitor of ribonucleotide reductase large subunit RRM1, controlling the endogenous dNTP pool and ensuring normal cell cycle progression. In vitro does not exhibit any S-adenosyl-L-homocysteine hydrolase activity. This is S-adenosylhomocysteine hydrolase-like protein 1 from Rattus norvegicus (Rat).